Here is a 155-residue protein sequence, read N- to C-terminus: Troponin C, isoform 3 (155 aa).

4 consecutive EF-hand domains span residues 11–46 (EQIAVLQKAFNSFDHQKTGSIPTEMVADILRLMGQP), 47–82 (FDKKILEELIEEVDEDKSGRLEFGEFVQLAAKFIVE), 87–122 (AMQKELREAFRLYDKQGNGFIPTTCLKEILKELDDQ), and 123–155 (LTEQELDIMIEEIDSDGSGTVDFDEFMEMMTGE). Residues D60, D62, S64, R66, and E71 each contribute to the Ca(2+) site. Ca(2+) contacts are provided by D136, D138, S140, T142, and E147.

Belongs to the troponin C family. As to expression, present in both larval and adult muscles.

The protein is Troponin C, isoform 3 (TpnC73F) of Drosophila melanogaster (Fruit fly).